Reading from the N-terminus, the 198-residue chain is Small ribosomal subunit protein uS4 (198 aa).

The disordered stretch occupies residues 26–45 (LKKRPYAPGQHGQRRSKLSN). The 64-residue stretch at 91–154 (SRLDNVVYRL…KNLTIVKEAL (64 aa)) folds into the S4 RNA-binding domain.

It belongs to the universal ribosomal protein uS4 family. In terms of assembly, part of the 30S ribosomal subunit. Contacts protein S5. The interaction surface between S4 and S5 is involved in control of translational fidelity.

Its function is as follows. One of the primary rRNA binding proteins, it binds directly to 16S rRNA where it nucleates assembly of the body of the 30S subunit. With S5 and S12 plays an important role in translational accuracy. The protein is Small ribosomal subunit protein uS4 of Acholeplasma laidlawii (strain PG-8A).